We begin with the raw amino-acid sequence, 119 residues long: Nascent polypeptide-associated complex protein (119 aa).

An NAC-A/B domain is found at 5–73 (RMNSREMRRL…FRETPKKQEG (69 aa)).

The protein belongs to the NAC-alpha family. Homodimer. Interacts with the ribosome. Binds ribosomal RNA.

Functionally, contacts the emerging nascent chain on the ribosome. The polypeptide is Nascent polypeptide-associated complex protein (Thermoplasma volcanium (strain ATCC 51530 / DSM 4299 / JCM 9571 / NBRC 15438 / GSS1)).